The primary structure comprises 458 residues: tRNA modification GTPase MnmE (458 aa).

Residues arginine 26, glutamate 88, and arginine 127 each coordinate (6S)-5-formyl-5,6,7,8-tetrahydrofolate. Residues 224-378 (GLSTAIIGRP…IEDRINQLFF (155 aa)) enclose the TrmE-type G domain. Residue asparagine 234 coordinates K(+). Residues 234-239 (NVGKSS), 253-259 (TDIAGTT), and 278-281 (DTAG) contribute to the GTP site. Serine 238 is a binding site for Mg(2+). Positions 253, 255, and 258 each coordinate K(+). Threonine 259 serves as a coordination point for Mg(2+). Residue lysine 458 coordinates (6S)-5-formyl-5,6,7,8-tetrahydrofolate.

This sequence belongs to the TRAFAC class TrmE-Era-EngA-EngB-Septin-like GTPase superfamily. TrmE GTPase family. In terms of assembly, homodimer. Heterotetramer of two MnmE and two MnmG subunits. It depends on K(+) as a cofactor.

The protein resides in the cytoplasm. In terms of biological role, exhibits a very high intrinsic GTPase hydrolysis rate. Involved in the addition of a carboxymethylaminomethyl (cmnm) group at the wobble position (U34) of certain tRNAs, forming tRNA-cmnm(5)s(2)U34. This chain is tRNA modification GTPase MnmE, found in Streptococcus pyogenes serotype M5 (strain Manfredo).